The sequence spans 202 residues: Protein lin-28 homolog A (202 aa).

2 disordered regions span residues 1 to 33 and 100 to 128; these read MPPA…GSFH and SLQV…RSKG. Positions 18 to 29 are enriched in acidic residues; that stretch reads EEEEAASSEEDS. The 74-residue stretch at 33–106 folds into the CSD domain; that stretch reads HGSGVCKWFN…GLESLQVTGP (74 aa). The flexible linker stretch occupies residues 107–130; the sequence is GGAPCVGSEKKPKGTQKRRSKGDR. 2 CCHC-type zinc fingers span residues 129-146 and 151-168; these read DRCF…ECQL and KKCH…NCPI. Residues Cys131, Cys134, His139, Cys144, Cys153, Cys156, His161, and Cys166 each coordinate Zn(2+). A disordered region spans residues 170 to 202; the sequence is AQQLSPGSQGKSTTSTGEEEDMSHTPLLPESTD. The segment covering 171 to 185 has biased composition (polar residues); that stretch reads QQLSPGSQGKSTTST. Ser174 is modified (phosphoserine).

The protein belongs to the lin-28 family. Monomer.

The protein resides in the cytoplasm. It localises to the rough endoplasmic reticulum. Its subcellular location is the P-body. The protein localises to the stress granule. It is found in the nucleus. The protein resides in the nucleolus. In terms of biological role, RNA-binding protein that inhibits processing of pre-let-7 miRNAs and regulates translation of mRNAs that control developmental timing, pluripotency and metabolism. Seems to recognize a common structural G-quartet (G4) feature in its miRNA and mRNA targets. 'Translational enhancer' that drives specific mRNAs to polysomes and increases the efficiency of protein synthesis. Its association with the translational machinery and target mRNAs results in an increased number of initiation events per molecule of mRNA and, indirectly, in mRNA stabilization. Suppressor of microRNA (miRNA) biogenesis, including that of let-7. Binds specific target miRNA precursors (pre-miRNAs), recognizing an 5'-GGAG-3' motif found in their terminal loop, and recruits uridylyltransferase. This results in the terminal uridylation of target pre-miRNAs. Uridylated pre-miRNAs fail to be processed by Dicer and undergo degradation. Localized to the periendoplasmic reticulum area, binds to a large number of spliced mRNAs and inhibits the translation of mRNAs destined for the ER, reducing the synthesis of transmembrane proteins, ER or Golgi lumen proteins, and secretory proteins. Binds to and enhances the translation of mRNAs for several metabolic enzymes, increasing glycolysis and oxidative phosphorylation. Which, with the let-7 repression may enhance tissue repair in adult tissue. In Danio rerio (Zebrafish), this protein is Protein lin-28 homolog A (lin28a).